Consider the following 56-residue polypeptide: Small ribosomal subunit protein uS14 (56 aa).

The Zn(2+) site is built by C21, C24, C39, and C42.

It belongs to the universal ribosomal protein uS14 family. Zn(2+) is required as a cofactor.

The polypeptide is Small ribosomal subunit protein uS14 (RPS29) (Griffithsia japonica (Red alga)).